The following is a 340-amino-acid chain: Ketol-acid reductoisomerase (NADP(+)) (340 aa).

Positions 3-183 (LPIYYDKDCD…GGGRTGIIHT (181 aa)) constitute a KARI N-terminal Rossmann domain. Residues 26-29 (FGSQ), serine 54, and 84-87 (DEIQ) each bind NADP(+). Residue histidine 109 is part of the active site. Residue glycine 135 participates in NADP(+) binding. In terms of domain architecture, KARI C-terminal knotted spans 184–329 (TFKDETETDL…KRLRAMMPWI (146 aa)). Mg(2+) contacts are provided by aspartate 192, glutamate 196, glutamate 228, and glutamate 232. Serine 253 lines the substrate pocket.

This sequence belongs to the ketol-acid reductoisomerase family. It depends on Mg(2+) as a cofactor.

It catalyses the reaction (2R)-2,3-dihydroxy-3-methylbutanoate + NADP(+) = (2S)-2-acetolactate + NADPH + H(+). The catalysed reaction is (2R,3R)-2,3-dihydroxy-3-methylpentanoate + NADP(+) = (S)-2-ethyl-2-hydroxy-3-oxobutanoate + NADPH + H(+). It participates in amino-acid biosynthesis; L-isoleucine biosynthesis; L-isoleucine from 2-oxobutanoate: step 2/4. Its pathway is amino-acid biosynthesis; L-valine biosynthesis; L-valine from pyruvate: step 2/4. Involved in the biosynthesis of branched-chain amino acids (BCAA). Catalyzes an alkyl-migration followed by a ketol-acid reduction of (S)-2-acetolactate (S2AL) to yield (R)-2,3-dihydroxy-isovalerate. In the isomerase reaction, S2AL is rearranged via a Mg-dependent methyl migration to produce 3-hydroxy-3-methyl-2-ketobutyrate (HMKB). In the reductase reaction, this 2-ketoacid undergoes a metal-dependent reduction by NADPH to yield (R)-2,3-dihydroxy-isovalerate. The chain is Ketol-acid reductoisomerase (NADP(+)) from Nitratiruptor sp. (strain SB155-2).